Reading from the N-terminus, the 952-residue chain is DNA topoisomerase 1 (952 aa).

The region spanning 12-135 (RRLVIVESPA…VKRMVFHEIT (124 aa)) is the Toprim domain. Mg(2+) contacts are provided by E18 and D104. Residues 150–602 (NQKLVDAQET…RFYFGEGDGT (453 aa)) enclose the Topo IA-type catalytic domain. The interval 184–189 (SAGRVQ) is interaction with DNA. The O-(5'-phospho-DNA)-tyrosine intermediate role is filled by Y334. The interval 847 to 952 (RFGPYVTDGE…KATASKTSED (106 aa)) is disordered. Over residues 871–884 (TPERGYELLAEKRA) the composition is skewed to basic and acidic residues. Residues 885–906 (KGPAKKTAKKAVKKTAAKKAPA) are compositionally biased toward basic residues. 2 stretches are compositionally biased toward low complexity: residues 907–930 (KKAAATKKTAAAKTTAAKKTAAKS) and 937–952 (AKTAAKKATASKTSED).

Belongs to the type IA topoisomerase family. As to quaternary structure, monomer. Requires Mg(2+) as cofactor.

The enzyme catalyses ATP-independent breakage of single-stranded DNA, followed by passage and rejoining.. In terms of biological role, releases the supercoiling and torsional tension of DNA, which is introduced during the DNA replication and transcription, by transiently cleaving and rejoining one strand of the DNA duplex. Introduces a single-strand break via transesterification at a target site in duplex DNA. The scissile phosphodiester is attacked by the catalytic tyrosine of the enzyme, resulting in the formation of a DNA-(5'-phosphotyrosyl)-enzyme intermediate and the expulsion of a 3'-OH DNA strand. The free DNA strand then undergoes passage around the unbroken strand, thus removing DNA supercoils. Finally, in the religation step, the DNA 3'-OH attacks the covalent intermediate to expel the active-site tyrosine and restore the DNA phosphodiester backbone. Relaxes supercoiled plasmid in vitro; in the presence of sIHF (integration host factor) relaxation is decreased. The polypeptide is DNA topoisomerase 1 (Streptomyces coelicolor (strain ATCC BAA-471 / A3(2) / M145)).